Here is a 199-residue protein sequence, read N- to C-terminus: Nucleoside triphosphate pyrophosphatase (199 aa).

Aspartate 76 serves as the catalytic Proton acceptor.

This sequence belongs to the Maf family. A divalent metal cation serves as cofactor.

The protein localises to the cytoplasm. It carries out the reaction a ribonucleoside 5'-triphosphate + H2O = a ribonucleoside 5'-phosphate + diphosphate + H(+). It catalyses the reaction a 2'-deoxyribonucleoside 5'-triphosphate + H2O = a 2'-deoxyribonucleoside 5'-phosphate + diphosphate + H(+). Nucleoside triphosphate pyrophosphatase. May have a dual role in cell division arrest and in preventing the incorporation of modified nucleotides into cellular nucleic acids. This Ruegeria pomeroyi (strain ATCC 700808 / DSM 15171 / DSS-3) (Silicibacter pomeroyi) protein is Nucleoside triphosphate pyrophosphatase.